Reading from the N-terminus, the 350-residue chain is tRNA N6-adenosine threonylcarbamoyltransferase (350 aa).

Fe cation contacts are provided by H117 and H121. Substrate-binding positions include 140 to 144 (LVSGG), D173, G186, and N277. Fe cation is bound at residue D305.

The protein belongs to the KAE1 / TsaD family. Fe(2+) is required as a cofactor.

It localises to the cytoplasm. The enzyme catalyses L-threonylcarbamoyladenylate + adenosine(37) in tRNA = N(6)-L-threonylcarbamoyladenosine(37) in tRNA + AMP + H(+). Functionally, required for the formation of a threonylcarbamoyl group on adenosine at position 37 (t(6)A37) in tRNAs that read codons beginning with adenine. Is involved in the transfer of the threonylcarbamoyl moiety of threonylcarbamoyl-AMP (TC-AMP) to the N6 group of A37, together with TsaE and TsaB. TsaD likely plays a direct catalytic role in this reaction. The polypeptide is tRNA N6-adenosine threonylcarbamoyltransferase (Novosphingobium aromaticivorans (strain ATCC 700278 / DSM 12444 / CCUG 56034 / CIP 105152 / NBRC 16084 / F199)).